A 420-amino-acid polypeptide reads, in one-letter code: Dynein axonemal assembly factor 4 (420 aa).

The region spanning 3-87 (LQVSDYSWQQ…KEAAMWETLS (85 aa)) is the CS domain. The mediates interaction with ESR1 and STUB1 stretch occupies residues 7–103 (DYSWQQTKTA…EMMQRIREKS (97 aa)). 3 TPR repeats span residues 290–323 (PEWL…NNKM), 324–357 (PLLY…LMPP), and 366–399 (MKAH…DPSN).

In terms of assembly, interacts with ZMYND10. Interacts with STUB1. Interacts with ESR1 and ESR2. Interacts with DNAAF2. Interacts with CCT3, CCT4, CCT5 and CCT8. Interacts with DNAAF6/PIH1D3.

It localises to the nucleus. The protein localises to the cytoplasm. Its subcellular location is the cell projection. It is found in the neuron projection. The protein resides in the dynein axonemal particle. Involved in neuronal migration during development of the cerebral neocortex. May regulate the stability and proteasomal degradation of the estrogen receptors that play an important role in neuronal differentiation, survival and plasticity. Axonemal dynein assembly factor required for ciliary motility. In Pan troglodytes (Chimpanzee), this protein is Dynein axonemal assembly factor 4.